The sequence spans 450 residues: UDP-N-acetylmuramoylalanine--D-glutamate ligase (450 aa).

An ATP-binding site is contributed by 115–121 (GTNGKST).

It belongs to the MurCDEF family.

It localises to the cytoplasm. The enzyme catalyses UDP-N-acetyl-alpha-D-muramoyl-L-alanine + D-glutamate + ATP = UDP-N-acetyl-alpha-D-muramoyl-L-alanyl-D-glutamate + ADP + phosphate + H(+). The protein operates within cell wall biogenesis; peptidoglycan biosynthesis. In terms of biological role, cell wall formation. Catalyzes the addition of glutamate to the nucleotide precursor UDP-N-acetylmuramoyl-L-alanine (UMA). The polypeptide is UDP-N-acetylmuramoylalanine--D-glutamate ligase (Syntrophotalea carbinolica (strain DSM 2380 / NBRC 103641 / GraBd1) (Pelobacter carbinolicus)).